The chain runs to 89 residues: Small ribosomal subunit protein uS15 (89 aa).

Belongs to the universal ribosomal protein uS15 family. Part of the 30S ribosomal subunit. Forms a bridge to the 50S subunit in the 70S ribosome, contacting the 23S rRNA.

In terms of biological role, one of the primary rRNA binding proteins, it binds directly to 16S rRNA where it helps nucleate assembly of the platform of the 30S subunit by binding and bridging several RNA helices of the 16S rRNA. Forms an intersubunit bridge (bridge B4) with the 23S rRNA of the 50S subunit in the ribosome. The polypeptide is Small ribosomal subunit protein uS15 (Bifidobacterium longum subsp. infantis (strain ATCC 15697 / DSM 20088 / JCM 1222 / NCTC 11817 / S12)).